A 93-amino-acid chain; its full sequence is Aspartyl/glutamyl-tRNA(Asn/Gln) amidotransferase subunit C (93 aa).

It belongs to the GatC family. In terms of assembly, heterotrimer of A, B and C subunits.

It catalyses the reaction L-glutamyl-tRNA(Gln) + L-glutamine + ATP + H2O = L-glutaminyl-tRNA(Gln) + L-glutamate + ADP + phosphate + H(+). The catalysed reaction is L-aspartyl-tRNA(Asn) + L-glutamine + ATP + H2O = L-asparaginyl-tRNA(Asn) + L-glutamate + ADP + phosphate + 2 H(+). Functionally, allows the formation of correctly charged Asn-tRNA(Asn) or Gln-tRNA(Gln) through the transamidation of misacylated Asp-tRNA(Asn) or Glu-tRNA(Gln) in organisms which lack either or both of asparaginyl-tRNA or glutaminyl-tRNA synthetases. The reaction takes place in the presence of glutamine and ATP through an activated phospho-Asp-tRNA(Asn) or phospho-Glu-tRNA(Gln). This chain is Aspartyl/glutamyl-tRNA(Asn/Gln) amidotransferase subunit C, found in Methanothrix thermoacetophila (strain DSM 6194 / JCM 14653 / NBRC 101360 / PT) (Methanosaeta thermophila).